Reading from the N-terminus, the 464-residue chain is Glutamate--tRNA ligase (464 aa).

Residues 9 to 19 (PSPTGYLHIGG) carry the 'HIGH' region motif. Residues 242–246 (KISKR) carry the 'KMSKS' region motif. Residue lysine 245 coordinates ATP.

The protein belongs to the class-I aminoacyl-tRNA synthetase family. Glutamate--tRNA ligase type 1 subfamily. As to quaternary structure, monomer.

It is found in the cytoplasm. The catalysed reaction is tRNA(Glu) + L-glutamate + ATP = L-glutamyl-tRNA(Glu) + AMP + diphosphate. Its function is as follows. Catalyzes the attachment of glutamate to tRNA(Glu) in a two-step reaction: glutamate is first activated by ATP to form Glu-AMP and then transferred to the acceptor end of tRNA(Glu). In Neisseria gonorrhoeae (strain ATCC 700825 / FA 1090), this protein is Glutamate--tRNA ligase.